The chain runs to 633 residues: Polypeptide N-acetylgalactosaminyltransferase 3 (633 aa).

At Met-1 to Lys-19 the chain is on the cytoplasmic side. A helical; Signal-anchor for type II membrane protein transmembrane segment spans residues Phe-20 to Met-37. Residues Gln-38–Asp-633 lie on the Lumenal side of the membrane. N-linked (GlcNAc...) asparagine glycosylation is present at Asn-132. The tract at residues Leu-184–Arg-293 is catalytic subdomain A. Mn(2+) contacts are provided by Asp-277 and His-279. N-linked (GlcNAc...) asparagine glycosylation occurs at Asn-297. The interval Pro-356 to Arg-418 is catalytic subdomain B. His-415 provides a ligand contact to Mn(2+). The N-linked (GlcNAc...) asparagine glycan is linked to Asn-484. Residues Val-504–Ser-630 form the Ricin B-type lectin domain. Cys-517 and Cys-535 are joined by a disulfide. Asp-519, Glu-522, His-536, and Asn-541 together coordinate UDP-N-acetyl-alpha-D-galactosamine. 2 cysteine pairs are disulfide-bonded: Cys-561–Cys-574 and Cys-605–Cys-618.

It belongs to the glycosyltransferase 2 family. GalNAc-T subfamily. It depends on Mn(2+) as a cofactor. As to expression, expressed in organs that contain secretory epithelial glands. Highly expressed in pancreas, skin, kidney and testis. Weakly expressed in prostate, ovary, intestine and colon. Also expressed in placenta and lung and fetal lung and fetal kidney.

Its subcellular location is the golgi apparatus. The protein localises to the golgi stack membrane. The catalysed reaction is L-seryl-[protein] + UDP-N-acetyl-alpha-D-galactosamine = a 3-O-[N-acetyl-alpha-D-galactosaminyl]-L-seryl-[protein] + UDP + H(+). The enzyme catalyses L-threonyl-[protein] + UDP-N-acetyl-alpha-D-galactosamine = a 3-O-[N-acetyl-alpha-D-galactosaminyl]-L-threonyl-[protein] + UDP + H(+). It participates in protein modification; protein glycosylation. Its function is as follows. Catalyzes the initial reaction in O-linked oligosaccharide biosynthesis, the transfer of an N-acetyl-D-galactosamine residue to a serine or threonine residue on the protein receptor. Has activity toward HIV envelope glycoprotein gp120, EA2, MUC2, MUC1A and MUC5AC. Probably glycosylates fibronectin in vivo. Glycosylates FGF23. The polypeptide is Polypeptide N-acetylgalactosaminyltransferase 3 (GALNT3) (Homo sapiens (Human)).